The primary structure comprises 358 residues: 5-amino-6-(D-ribitylamino)uracil--L-tyrosine 4-hydroxyphenyl transferase 2 (358 aa).

In terms of domain architecture, Radical SAM core spans 45 to 292 (VTFVKNTNIE…ESIKNIQAPR (248 aa)). 3 residues coordinate [4Fe-4S] cluster: Cys59, Cys63, and Cys66.

This sequence belongs to the radical SAM superfamily. CofH family. As to quaternary structure, consists of two subunits, CofG and CofH. It depends on [4Fe-4S] cluster as a cofactor.

The catalysed reaction is 5-amino-6-(D-ribitylamino)uracil + L-tyrosine + S-adenosyl-L-methionine = 5-amino-5-(4-hydroxybenzyl)-6-(D-ribitylimino)-5,6-dihydrouracil + 2-iminoacetate + 5'-deoxyadenosine + L-methionine + H(+). It participates in cofactor biosynthesis; coenzyme F0 biosynthesis. In terms of biological role, catalyzes the radical-mediated synthesis of 5-amino-5-(4-hydroxybenzyl)-6-(D-ribitylimino)-5,6-dihydrouracil from 5-amino-6-(D-ribitylamino)uracil and L-tyrosine. This is 5-amino-6-(D-ribitylamino)uracil--L-tyrosine 4-hydroxyphenyl transferase 2 from Methanococcus maripaludis (strain DSM 14266 / JCM 13030 / NBRC 101832 / S2 / LL).